The primary structure comprises 804 residues: Cas scaffolding protein family member 4 (804 aa).

Residues 11-73 form the SH3 domain; the sequence is PKTLLARALY…PANRLQVLRE (63 aa). Residues serine 200 and serine 297 each carry the phosphoserine modification. Disordered regions lie at residues 369 to 395, 607 to 628, and 642 to 686; these read LERG…DSDR, QRET…TEHS, and QQSP…TERK. Positions 380 to 390 are enriched in polar residues; sequence PWISGQTSFLS. Positions 649-664 are enriched in basic and acidic residues; sequence EKGKPTMEGKSNRNPD.

Belongs to the CAS family. As to quaternary structure, interacts (via SH3 domain) with PTK2/FAK1 (via C-terminus). Post-translationally, phosphorylated on tyrosines by SRC.

The protein localises to the cytoplasm. It localises to the cytoskeleton. The protein resides in the cell junction. It is found in the focal adhesion. Functionally, docking protein that plays a role in tyrosine kinase-based signaling related to cell adhesion and cell spreading. Regulates PTK2/FAK1 activity, focal adhesion integrity, and cell spreading. The sequence is that of Cas scaffolding protein family member 4 from Mus musculus (Mouse).